Here is a 54-residue protein sequence, read N- to C-terminus: Hemolytic toxin (54 aa).

A plays an important role in the hemolytic activity region spans residues 3-12; the sequence is ALAGTIIAGA. The tract at residues 11-30 is N-terminal region; it reads GASLGFQILDKVLGELGKVS.

This sequence belongs to the actinoporin family. Sea anemone subfamily. Octamer or nonamer in membranes. Monomer in the soluble state.

It localises to the secreted. It is found in the nematocyst. Its subcellular location is the target cell membrane. Pore-forming protein that forms cations-selective hydrophilic pores of around 1 nm and causes cytolysis. Pore formation is a multi-step process that involves specific recognition of membrane sphingomyelin (but neither cholesterol nor phosphatidylcholine) using aromatic rich region and adjacent phosphocholine (POC) binding site, firm binding to the membrane (mainly driven by hydrophobic interactions) accompanied by the transfer of the N-terminal region to the lipid-water interface and finally pore formation after oligomerization of monomers. This chain is Hemolytic toxin, found in Heteractis magnifica (Magnificent sea anemone).